Consider the following 283-residue polypeptide: Ribosomal RNA small subunit methyltransferase H (283 aa).

S-adenosyl-L-methionine is bound by residues 31-33 (GGH), D50, F77, D93, and Q100.

It belongs to the methyltransferase superfamily. RsmH family.

It localises to the cytoplasm. It carries out the reaction cytidine(1402) in 16S rRNA + S-adenosyl-L-methionine = N(4)-methylcytidine(1402) in 16S rRNA + S-adenosyl-L-homocysteine + H(+). Its function is as follows. Specifically methylates the N4 position of cytidine in position 1402 (C1402) of 16S rRNA. This is Ribosomal RNA small subunit methyltransferase H from Trichodesmium erythraeum (strain IMS101).